Reading from the N-terminus, the 551-residue chain is Probable malate:quinone oxidoreductase (551 aa).

Positions 525-544 are enriched in low complexity; the sequence is QTAAAAPQAQPQLKPQPDAK. Residues 525–551 form a disordered region; sequence QTAAAAPQAQPQLKPQPDAKPVADIAL.

It belongs to the MQO family. The cofactor is FAD.

It catalyses the reaction (S)-malate + a quinone = a quinol + oxaloacetate. It participates in carbohydrate metabolism; tricarboxylic acid cycle; oxaloacetate from (S)-malate (quinone route): step 1/1. This Enterobacter sp. (strain 638) protein is Probable malate:quinone oxidoreductase.